The chain runs to 621 residues: DNA mismatch repair protein MutL (621 aa).

Belongs to the DNA mismatch repair MutL/HexB family.

In terms of biological role, this protein is involved in the repair of mismatches in DNA. It is required for dam-dependent methyl-directed DNA mismatch repair. May act as a 'molecular matchmaker', a protein that promotes the formation of a stable complex between two or more DNA-binding proteins in an ATP-dependent manner without itself being part of a final effector complex. The chain is DNA mismatch repair protein MutL from Petrotoga mobilis (strain DSM 10674 / SJ95).